A 354-amino-acid chain; its full sequence is GTPase Obg (354 aa).

The region spanning methionine 1–isoleucine 159 is the Obg domain. In terms of domain architecture, OBG-type G spans alanine 160 to arginine 328. Residues glycine 166 to serine 173, phenylalanine 191 to threonine 195, aspartate 213 to glycine 216, asparagine 280 to aspartate 283, and serine 309 to valine 311 each bind GTP. 2 residues coordinate Mg(2+): serine 173 and threonine 193. Acidic residues predominate over residues glutamate 335–valine 345. The disordered stretch occupies residues glutamate 335–proline 354.

Belongs to the TRAFAC class OBG-HflX-like GTPase superfamily. OBG GTPase family. In terms of assembly, monomer. It depends on Mg(2+) as a cofactor.

The protein localises to the cytoplasm. An essential GTPase which binds GTP, GDP and possibly (p)ppGpp with moderate affinity, with high nucleotide exchange rates and a fairly low GTP hydrolysis rate. Plays a role in control of the cell cycle, stress response, ribosome biogenesis and in those bacteria that undergo differentiation, in morphogenesis control. In Caulobacter vibrioides (strain ATCC 19089 / CIP 103742 / CB 15) (Caulobacter crescentus), this protein is GTPase Obg.